A 220-amino-acid chain; its full sequence is UPF0711 protein C18orf21 (220 aa).

Residues 117–181 (SRSFVSTLKS…VSTCSSKNTS (65 aa)) are disordered. The segment covering 119 to 136 (SFVSTLKSNPATPTSKLS) has biased composition (polar residues). Position 126 is a phosphoserine (S126). A phosphothreonine mark is found at T130 and T139. Residues 171–180 (SVSTCSSKNT) are compositionally biased toward low complexity.

The protein belongs to the UPF0711 family.

This Homo sapiens (Human) protein is UPF0711 protein C18orf21 (C18orf21).